The sequence spans 478 residues: Deoxyribodipyrimidine photo-lyase (478 aa).

The 135-residue stretch at 2–136 (NVNLMWFRND…IINCFHDSVL (135 aa)) folds into the Photolyase/cryptochrome alpha/beta domain. E110 is a (6R)-5,10-methylene-5,6,7,8-tetrahydrofolate binding site. FAD-binding positions include Y227 and 239-243 (TSMLS). Interaction with DNA stretches follow at residues 279 to 286 (ELLWREFY) and 346 to 347 (NR). 377–379 (DGD) is an FAD binding site. Q409 contributes to the DNA binding site.

This sequence belongs to the DNA photolyase class-1 family. Monomer. Requires FAD as cofactor. The cofactor is (6R)-5,10-methylene-5,6,7,8-tetrahydrofolate.

The enzyme catalyses cyclobutadipyrimidine (in DNA) = 2 pyrimidine residues (in DNA).. Its function is as follows. Involved in repair of UV radiation-induced DNA damage. Catalyzes the light-dependent monomerization (300-600 nm) of cyclobutyl pyrimidine dimers (in cis-syn configuration), which are formed between adjacent bases on the same DNA strand upon exposure to ultraviolet radiation. The polypeptide is Deoxyribodipyrimidine photo-lyase (phrB) (Buchnera aphidicola subsp. Baizongia pistaciae (strain Bp)).